The chain runs to 557 residues: Formate--tetrahydrofolate ligase (557 aa).

T66 to S73 lines the ATP pocket.

It belongs to the formate--tetrahydrofolate ligase family.

The catalysed reaction is (6S)-5,6,7,8-tetrahydrofolate + formate + ATP = (6R)-10-formyltetrahydrofolate + ADP + phosphate. The protein operates within one-carbon metabolism; tetrahydrofolate interconversion. The polypeptide is Formate--tetrahydrofolate ligase (Clostridium botulinum (strain Kyoto / Type A2)).